A 134-amino-acid polypeptide reads, in one-letter code: Estradiol 17-beta-dehydrogenase 8 (134 aa).

Serine 38 is a binding site for substrate. An N6-succinyllysine modification is found at lysine 42. The Proton acceptor role is filled by tyrosine 51. Residues 51–55 and 84–86 each bind NAD(+); these read YAASK and IAT. The residue at position 55 (lysine 55) is an N6-succinyllysine.

It belongs to the short-chain dehydrogenases/reductases (SDR) family. As to quaternary structure, heterotetramer with CBR4; contains two molecules of HSD17B8 and CBR4.

The protein resides in the mitochondrion matrix. It carries out the reaction 17beta-estradiol + NAD(+) = estrone + NADH + H(+). The catalysed reaction is 17beta-estradiol + NADP(+) = estrone + NADPH + H(+). The enzyme catalyses testosterone + NAD(+) = androst-4-ene-3,17-dione + NADH + H(+). The protein operates within steroid biosynthesis; estrogen biosynthesis. It participates in lipid metabolism; fatty acid biosynthesis. NAD-dependent 17-beta-hydroxysteroid dehydrogenase with highest activity towards estradiol. Has very low activity towards testosterone. The heterotetramer with CBR4 has NADH-dependent 3-ketoacyl-acyl carrier protein reductase activity, and thereby plays a role in mitochondrial fatty acid biosynthesis. Within the heterotetramer, HSD17B8 binds NADH; CBR4 binds NADPD. This chain is Estradiol 17-beta-dehydrogenase 8 (HSD17B8), found in Callithrix jacchus (White-tufted-ear marmoset).